Consider the following 332-residue polypeptide: Ketol-acid reductoisomerase (NADP(+)) (332 aa).

Residues 1–182 form the KARI N-terminal Rossmann domain; the sequence is MATIYYEKDA…GCTRAGVLAT (182 aa). Residues 25 to 28, R48, S53, and 83 to 86 each bind NADP(+); these read YGSQ and DELQ. Residue H108 is part of the active site. Residue G134 coordinates NADP(+). Positions 183-328 constitute a KARI C-terminal knotted domain; that stretch reads TFKEETETDL…KELRSMMPWL (146 aa). The Mg(2+) site is built by D191, E195, E227, and E231. Substrate is bound at residue S252.

It belongs to the ketol-acid reductoisomerase family. The cofactor is Mg(2+).

The catalysed reaction is (2R)-2,3-dihydroxy-3-methylbutanoate + NADP(+) = (2S)-2-acetolactate + NADPH + H(+). The enzyme catalyses (2R,3R)-2,3-dihydroxy-3-methylpentanoate + NADP(+) = (S)-2-ethyl-2-hydroxy-3-oxobutanoate + NADPH + H(+). It participates in amino-acid biosynthesis; L-isoleucine biosynthesis; L-isoleucine from 2-oxobutanoate: step 2/4. It functions in the pathway amino-acid biosynthesis; L-valine biosynthesis; L-valine from pyruvate: step 2/4. Functionally, involved in the biosynthesis of branched-chain amino acids (BCAA). Catalyzes an alkyl-migration followed by a ketol-acid reduction of (S)-2-acetolactate (S2AL) to yield (R)-2,3-dihydroxy-isovalerate. In the isomerase reaction, S2AL is rearranged via a Mg-dependent methyl migration to produce 3-hydroxy-3-methyl-2-ketobutyrate (HMKB). In the reductase reaction, this 2-ketoacid undergoes a metal-dependent reduction by NADPH to yield (R)-2,3-dihydroxy-isovalerate. The protein is Ketol-acid reductoisomerase (NADP(+)) of Methanocella arvoryzae (strain DSM 22066 / NBRC 105507 / MRE50).